The sequence spans 140 residues: MAGLPDRDKLIRNFSRCLNWEEKYLYIIELGGQLAPLTEQQRHPENLISGCQSQVWIAMTLSAEGHVIFAGDSDAAIVKGLVAVVFILYHDLTPQQIVSLDVRPFFADLALSQHLTPSRSQGLEAMIRAIRTKVADLSAH.

Cysteine 51 serves as the catalytic Cysteine persulfide intermediate.

The protein belongs to the SufE family. As to quaternary structure, homodimer. Interacts with SufS.

It is found in the cytoplasm. The protein operates within cofactor biosynthesis; iron-sulfur cluster biosynthesis. Its function is as follows. Participates in cysteine desulfuration mediated by SufS. Cysteine desulfuration mobilizes sulfur from L-cysteine to yield L-alanine and constitutes an essential step in sulfur metabolism for biosynthesis of a variety of sulfur-containing biomolecules. Functions as a sulfur acceptor for SufS, by mediating the direct transfer of the sulfur atom from the S-sulfanylcysteine of SufS, an intermediate product of cysteine desulfuration process. This Yersinia pseudotuberculosis serotype O:1b (strain IP 31758) protein is Cysteine desulfuration protein SufE.